Reading from the N-terminus, the 144-residue chain is Large ribosomal subunit protein uL11 (144 aa).

It belongs to the universal ribosomal protein uL11 family. As to quaternary structure, part of the ribosomal stalk of the 50S ribosomal subunit. Interacts with L10 and the large rRNA to form the base of the stalk. L10 forms an elongated spine to which L12 dimers bind in a sequential fashion forming a multimeric L10(L12)X complex. One or more lysine residues are methylated.

Forms part of the ribosomal stalk which helps the ribosome interact with GTP-bound translation factors. The chain is Large ribosomal subunit protein uL11 from Streptomyces coelicolor (strain ATCC BAA-471 / A3(2) / M145).